Consider the following 237-residue polypeptide: Pyridoxal phosphate homeostasis protein (237 aa).

An N6-(pyridoxal phosphate)lysine modification is found at K31.

It belongs to the pyridoxal phosphate-binding protein YggS/PROSC family.

It localises to the cytoplasm. It is found in the nucleus. Functionally, pyridoxal 5'-phosphate (PLP)-binding protein, which may be involved in intracellular homeostatic regulation of pyridoxal 5'-phosphate (PLP), the active form of vitamin B6. This chain is Pyridoxal phosphate homeostasis protein, found in Schizosaccharomyces pombe (strain 972 / ATCC 24843) (Fission yeast).